A 317-amino-acid polypeptide reads, in one-letter code: MAGLRIIFMGTPEFACPTLRKLIERGEEVIAVVTQPDRPKGRGQKLVPPPVKALAQEHDIPVLQPLKVRTPESVDEIRRLAPDLIVVVAFGQILPQSLLDIPKHGCINIHASLLPRYRGAAPLNWCLINGETETGITTMMMDAGLDTGDMLVKRAIPIGPDEDAQSLHDRLSQLGAETIDETLDLLLAGKLVREKQDDSLTCYAPMLKKEDGLVDWTREPVQVKNQVRGFTPWPGAYTFLDGKTLKLYRVAVAGETGEPGEILRVGREGILVGCGSGSILIQELQLEGRKRLPTAEFLAGFRLEPGTRLGEAGSVEH.

112–115 provides a ligand contact to (6S)-5,6,7,8-tetrahydrofolate; sequence SLLP.

The protein belongs to the Fmt family.

The catalysed reaction is L-methionyl-tRNA(fMet) + (6R)-10-formyltetrahydrofolate = N-formyl-L-methionyl-tRNA(fMet) + (6S)-5,6,7,8-tetrahydrofolate + H(+). In terms of biological role, attaches a formyl group to the free amino group of methionyl-tRNA(fMet). The formyl group appears to play a dual role in the initiator identity of N-formylmethionyl-tRNA by promoting its recognition by IF2 and preventing the misappropriation of this tRNA by the elongation apparatus. The sequence is that of Methionyl-tRNA formyltransferase from Geobacter sulfurreducens (strain ATCC 51573 / DSM 12127 / PCA).